The primary structure comprises 212 residues: uncharacterized protein (212 aa).

Pentapeptide repeat domains follow at residues 63-102 (VSFRHIELTDVIFEKCDLSNADFSGAVIHRTSVKQSKMVG), 103-142 (MNVAEATLRNVSFEECHGHFSSFSYSNMKQVRFDHCALMQ), and 143-182 (SECSDTVLQQTHFDGCELEGASFTGTSLQNMDISTCRFEQ).

This is an uncharacterized protein from Bacillus subtilis (strain 168).